The chain runs to 23 residues: Coenzyme PQQ synthesis protein A (23 aa).

The pyrroloquinoline quinone (Glu-Tyr) cross-link spans 15-19 (EVTLY).

Belongs to the PqqA family.

It functions in the pathway cofactor biosynthesis; pyrroloquinoline quinone biosynthesis. In terms of biological role, required for coenzyme pyrroloquinoline quinone (PQQ) biosynthesis. PQQ is probably formed by cross-linking a specific glutamate to a specific tyrosine residue and excising these residues from the peptide. The protein is Coenzyme PQQ synthesis protein A of Colwellia psychrerythraea (strain 34H / ATCC BAA-681) (Vibrio psychroerythus).